We begin with the raw amino-acid sequence, 510 residues long: Thermostable carboxypeptidase 1 (510 aa).

Residues 3–506 (PEAAYQNLLE…FLAYLEKKYA (504 aa)) enclose the Peptidase M32 domain. The HPF motif lies at 245–247 (HPF). The DXRXT signature appears at 255 to 259 (DVRIT). His276 contacts Zn(2+). Positions 276-280 (HEMGH) match the HEXXH motif. Glu277 functions as the Proton donor/acceptor in the catalytic mechanism. Zn(2+) contacts are provided by His280 and Glu306. The HES/GQ signature appears at 305 to 308 (HESQ). Positions 357–362 (IRVEAD) match the I/NRXXA/SD motif. The short motif at 412 to 419 (GVMQDVHW) is the GXXQDXHW element.

This sequence belongs to the peptidase M32 family. Homodimer. The cofactor is Zn(2+).

The enzyme catalyses Release of a C-terminal amino acid with broad specificity, except for -Pro.. Broad specificity carboxypetidase that releases amino acids sequentially from the C-terminus, including neutral, aromatic, polar and basic residues, but not Pro. Has lower activity with substrates ending with Gly or Glu. In Thermus thermophilus (strain ATCC 27634 / DSM 579 / HB8), this protein is Thermostable carboxypeptidase 1.